Consider the following 1044-residue polypeptide: MENAHTKTVEEVLGHFGVNESTGLSLEQVKKLKERWGSNELPAEEGKTLLELVIEQFEDLLVRILLLAACISFVLAWFEEGEETITAFVEPFVILLILVANAIVGVWQERNAENAIEALKEYEPEMGKVYRQDRKSVQRIKAKDIVPGDIVEIAVGDKVPADIRLTSIKSTTLRVDQSILTGESVSVIKHTDPVPDPRAVNQDKKNMLFSGTNIAAGKAMGVVVATGVNTEIGKIRDEMVATEQERTPLQQKLDEFGEQLSKVISLICIAVWIINIGHFNDPVHGGSWIRGAIYYFKIAVALAVAAIPEGLPAVITTCLALGTRRMAKKNAIVRSLPSVETLGCTSVICSDKTGTLTTNQMSVCRMFILDKVEGDTCSLNEFSITGSTYAPIGEVQKDDKPVKCHQYDGLVELATICALCNDSALDYNEAKGVYEKVGEATETALTCLVEKMNVFDTELKGLSKIERANACNSVIKQLMKKEFTLEFSRDRKSMSVYCTPNKPSRTSMSKMFVKGAPEGVIDRCTHIRVGSTKVPMTPGVKQKIMSVIREWGSGSDTLRCLALATHDNPLKREEMHLEDSANFIKYETNLTFVGCVGMLDPPRIEVASSVKLCRQAGIRVIMITGDNKGTAVAICRRIGIFGQDEDVTSKAFTGREFDELSPSAQRDACLNARCFARVEPSHKSKIVEFLQSFDEITAMTGDGVNDAPALKKSEIGIAMGSGTAVAKTASEMVLADDNFSTIVAAVEEGRAIYNNMKQFIRYLISSNVGEVVCIFLTAALGFPEALIPVQLLWVNLVTDGLPATALGFNPPDLDIMNKPPRNPKEPLISGWLFFRYLAIGCYVGAATVGAAAWWFIAADGGPRVSFYQLSHFLQCKEDNPDFDGVDCAIFESPYPMTMALSVLVTIEMCNALNSLSENQSLLRMPPWENIWLVGSICLSMSLHFLILYVEPLPLIFQITPLNLTQWLMVLKISLPVILMDETLKFVARNYLEQPGKECVQPATKSSCSLSACTDGISWPFVLLIMPLVVWVYSTDTNFSDMFWS.

Over 1-48 (MENAHTKTVEEVLGHFGVNESTGLSLEQVKKLKERWGSNELPAEEGKT) the chain is Cytoplasmic. A Phosphoserine modification is found at Ser-38. The helical transmembrane segment at 49–69 (LLELVIEQFEDLLVRILLLAA) threads the bilayer. The Lumenal segment spans residues 70–89 (CISFVLAWFEEGEETITAFV). Residues 90-110 (EPFVILLILVANAIVGVWQER) traverse the membrane as a helical segment. The Cytoplasmic portion of the chain corresponds to 111–253 (NAENAIEALK…QERTPLQQKL (143 aa)). Residues 254 to 273 (DEFGEQLSKVISLICIAVWI) traverse the membrane as a helical segment. Residues 274–295 (INIGHFNDPVHGGSWIRGAIYY) lie on the Lumenal side of the membrane. 3'-nitrotyrosine is present on residues Tyr-294 and Tyr-295. The helical transmembrane segment at 296 to 313 (FKIAVALAVAAIPEGLPA) threads the bilayer. 4 residues coordinate Ca(2+): Val-304, Ala-305, Ile-307, and Glu-309. Residues 314 to 756 (VITTCLALGT…EEGRAIYNNM (443 aa)) lie on the Cytoplasmic side of the membrane. Residue Asp-351 is the 4-aspartylphosphate intermediate of the active site. 2 residues coordinate Mg(2+): Asp-351 and Thr-353. Residue Thr-353 participates in ATP binding. Thr-441 carries the post-translational modification Phosphothreonine. The ATP site is built by Glu-442, Arg-489, and Lys-514. Residue Ser-531 is modified to Phosphoserine. Arg-559 contacts ATP. The segment at 575–594 (MHLEDSANFIKYETNLTFVG) is interaction with HAX1. Phosphoserine is present on Ser-580. Residues Thr-624, Gly-625, and Asp-626 each contribute to the ATP site. 2 positions are modified to phosphoserine: Ser-661 and Ser-663. ATP is bound by residues Arg-677 and Lys-683. Residue Asp-702 coordinates Mg(2+). Position 705 (Asn-705) interacts with ATP. Residues 757–776 (KQFIRYLISSNVGEVVCIFL) traverse the membrane as a helical segment. Ca(2+)-binding residues include Asn-767 and Glu-770. The Lumenal segment spans residues 777–786 (TAALGFPEAL). Residues 787–807 (IPVQLLWVNLVTDGLPATALG) form a helical membrane-spanning segment. Residues 787-807 (IPVQLLWVNLVTDGLPATALG) are interaction with PLN. The interaction with TMEM64 and PDIA3 stretch occupies residues 788–1044 (PVQLLWVNLV…DTNFSDMFWS (257 aa)). Residues Asn-795, Thr-798, and Asp-799 each coordinate Ca(2+). The Cytoplasmic segment spans residues 808 to 827 (FNPPDLDIMNKPPRNPKEPL). Residues 828–850 (ISGWLFFRYLAIGCYVGAATVGA) traverse the membrane as a helical segment. The Lumenal segment spans residues 851–896 (AAWWFIAADGGPRVSFYQLSHFLQCKEDNPDFDGVDCAIFESPYPM). Cys-875 and Cys-887 form a disulfide bridge. The helical transmembrane segment at 897-916 (TMALSVLVTIEMCNALNSLS) threads the bilayer. Glu-907 is a Ca(2+) binding site. The Cytoplasmic segment spans residues 917 to 929 (ENQSLLRMPPWEN). The helical transmembrane segment at 930–948 (IWLVGSICLSMSLHFLILY) threads the bilayer. Residues 931-942 (WLVGSICLSMSL) are interaction with PLN. Residues 949–963 (VEPLPLIFQITPLNL) are Lumenal-facing. A helical membrane pass occupies residues 964–984 (TQWLMVLKISLPVILMDETLK). At 985–1044 (FVARNYLEQPGKECVQPATKSSCSLSACTDGISWPFVLLIMPLVVWVYSTDTNFSDMFWS) the chain is on the cytoplasmic side.

The protein belongs to the cation transport ATPase (P-type) (TC 3.A.3) family. Type IIA subfamily. Interacts with sarcolipin (SLN); the interaction inhibits ATP2A2 Ca(2+) affinity. Interacts with phospholamban (PLN); the interaction inhibits ATP2A2 Ca(2+) affinity. Interacts with myoregulin (MRLN). Interacts with ARLN and ERLN; the interactions inhibit ATP2A2 Ca(2+) affinity. Interacts with STRIT1/DWORF; the interaction results in activation of ATP2A2. Interacts with the monomeric forms of SLN, PLN, ARLN, ERLN and STRI1/DWORF. Interacts with HAX1. Interacts with S100A8 and S100A9. Interacts with SLC35G1 and STIM1. Interacts with TMEM203. Interacts with TMEM64 and PDIA3. Interacts with TMX1. Interacts with TMX2. Interacts with VMP1; VMP1 competes with PLN and SLN to prevent them from forming an inhibitory complex with ATP2A2. Interacts with ULK1. Interacts with S100A1 in a Ca(2+)-dependent manner. Interacts with TUNAR. Interacts with FLVCR2; this interaction occurs in the absence of heme and promotes ATP2A2 proteasomal degradation; this complex is dissociated upon heme binding. Interacts with FNIP1. As to quaternary structure, interacts with TRAM2 (via C-terminus). Mg(2+) is required as a cofactor. Nitrated under oxidative stress. Nitration on the two tyrosine residues inhibits catalytic activity. In terms of processing, serotonylated on Gln residues by TGM2 in response to hypoxia, leading to its inactivation. As to expression, isoform 2 is highly expressed in heart and slow twitch skeletal muscle. Isoform 2 is widely expressed.

The protein resides in the endoplasmic reticulum membrane. It localises to the sarcoplasmic reticulum membrane. It catalyses the reaction Ca(2+)(in) + ATP + H2O = Ca(2+)(out) + ADP + phosphate + H(+). Its activity is regulated as follows. Has different conformational states with differential Ca2+ affinity. The E1 conformational state (active form) shows high Ca(2+) affinity, while the E2 state exhibits low Ca(2+) affinity. Binding of ATP allosterically increases its affinity for subsequent binding of Ca2+. Reversibly inhibited by phospholamban (PLN) at low calcium concentrations. PLN inhibits ATP2A2 Ca(2+) affinity by disrupting its allosteric activation by ATP. Inhibited by sarcolipin (SLN) and myoregulin (MRLN). The inhibition is blocked by VMP1. Enhanced by STRIT1/DWORF; STRIT1 increases activity by displacing sarcolipin (SLN), phospholamban (PLN) and myoregulin (MRLN). Stabilizes SERCA2 in its E2 state. This magnesium-dependent enzyme catalyzes the hydrolysis of ATP coupled with the translocation of calcium from the cytosol to the sarcoplasmic reticulum lumen. Involved in autophagy in response to starvation. Upon interaction with VMP1 and activation, controls ER-isolation membrane contacts for autophagosome formation. Also modulates ER contacts with lipid droplets, mitochondria and endosomes. In coordination with FLVCR2 mediates heme-stimulated switching from mitochondrial ATP synthesis to thermogenesis. Its function is as follows. Involved in the regulation of the contraction/relaxation cycle. Acts as a regulator of TNFSF11-mediated Ca(2+) signaling pathways via its interaction with TMEM64 which is critical for the TNFSF11-induced CREB1 activation and mitochondrial ROS generation necessary for proper osteoclast generation. Association between TMEM64 and SERCA2 in the ER leads to cytosolic Ca(2+) spiking for activation of NFATC1 and production of mitochondrial ROS, thereby triggering Ca(2+) signaling cascades that promote osteoclast differentiation and activation. The chain is Sarcoplasmic/endoplasmic reticulum calcium ATPase 2 from Mus musculus (Mouse).